Reading from the N-terminus, the 239-residue chain is Leucine rich adaptor protein 1 (239 aa).

LRR repeat units follow at residues 55-83 (LGDK…LVTL) and 93-114 (LLEE…QYSL). Over residues 105–116 (SSLTSSQYSLTG) the composition is skewed to low complexity. Residues 105-138 (SSLTSSQYSLTGGSPGRSRRGSWDSLPDTSSTDR) are disordered. Phosphoserine occurs at positions 118, 126, and 129.

Forms a tripartite complex with CDC42BPA/CDC42BPB and MYO18A acting as an adapter connecting both. Its binding to CDC42BPA/CDC42BPB results in their activation by abolition of their negative autoregulation. Interacts with CDC42BPA and CDC42BPB. Post-translationally, phosphorylated.

It is found in the cytoplasm. Acts as an activator of the canonical NF-kappa-B pathway and drive the production of pro-inflammatory cytokines. Promotes the antigen (Ag)-presenting and priming function of dendritic cells via the canonical NF-kappa-B pathway. In concert with MYO18A and CDC42BPA/CDC42BPB, is involved in modulating lamellar actomyosin retrograde flow that is crucial to cell protrusion and migration. Activates CDC42BPA/CDC42BPB and targets it to actomyosin through its interaction with MYO18A, leading to MYL9/MLC2 phosphorylation and MYH9/MYH10-dependent actomyosin assembly in the lamella. This Mus musculus (Mouse) protein is Leucine rich adaptor protein 1 (Lurap1).